The chain runs to 412 residues: Tyrosine--tRNA ligase 1 (412 aa).

Tyr41 contacts L-tyrosine. The short motif at 46 to 55 (ATADSLHVGH) is the 'HIGH' region element. Residues Tyr174 and Gln178 each contribute to the L-tyrosine site. The short motif at 234–238 (KMGKS) is the 'KMSKS' region element. Lys237 is an ATP binding site. In terms of domain architecture, S4 RNA-binding spans 348–411 (LSLTDLLLEH…KKQHLHLRLE (64 aa)).

This sequence belongs to the class-I aminoacyl-tRNA synthetase family. TyrS type 1 subfamily. In terms of assembly, homodimer.

It localises to the cytoplasm. It catalyses the reaction tRNA(Tyr) + L-tyrosine + ATP = L-tyrosyl-tRNA(Tyr) + AMP + diphosphate + H(+). In terms of biological role, catalyzes the attachment of tyrosine to tRNA(Tyr) in a two-step reaction: tyrosine is first activated by ATP to form Tyr-AMP and then transferred to the acceptor end of tRNA(Tyr). This is Tyrosine--tRNA ligase 1 from Pseudomonas aeruginosa (strain ATCC 15692 / DSM 22644 / CIP 104116 / JCM 14847 / LMG 12228 / 1C / PRS 101 / PAO1).